The chain runs to 306 residues: MQRLGPFSTLYGRVLAPLPGRAGGAASGGGGNSWGVLGSHVQPPGRAQFGVGSTSTSSGDANSVCPAPSTMSKAEEAKKLAGRAAVENHVRNNQVLGIGSGSTIVHAVQRIAERVKQENLNLICIPTSFQARQLILQHGLTLSDLDRHPEIDLAIDGADEVDADLNLIKGGGGCLTQEKIVAGNASRFIVIADFRKDSKNLGDQWHKGIPIEVIPMAYVPVSRTVTQKFGGVIELRMAVNKAGPVVTDNGNFILDWKFDRVHKWSEVNTAITMIPGVVDTGLFINMAERVYFGMQDGSVNMREKPF.

Positions 45-68 are disordered; the sequence is GRAQFGVGSTSTSSGDANSVCPAP. The segment covering 51–61 has biased composition (polar residues); sequence VGSTSTSSGDA. At serine 102 the chain carries Phosphoserine.

The protein belongs to the ribose 5-phosphate isomerase family.

The catalysed reaction is aldehydo-D-ribose 5-phosphate = D-ribulose 5-phosphate. It functions in the pathway carbohydrate degradation; pentose phosphate pathway; D-ribose 5-phosphate from D-ribulose 5-phosphate (non-oxidative stage): step 1/1. In Sus scrofa (Pig), this protein is Ribose-5-phosphate isomerase.